A 156-amino-acid polypeptide reads, in one-letter code: 6,7-dimethyl-8-ribityllumazine synthase (156 aa).

Residues Phe23, 57 to 59 (AYE), and 81 to 83 (AII) each bind 5-amino-6-(D-ribitylamino)uracil. 86 to 87 (GT) serves as a coordination point for (2S)-2-hydroxy-3-oxobutyl phosphate. Residue His89 is the Proton donor of the active site. Phe114 provides a ligand contact to 5-amino-6-(D-ribitylamino)uracil. Residue Arg128 participates in (2S)-2-hydroxy-3-oxobutyl phosphate binding.

This sequence belongs to the DMRL synthase family.

The enzyme catalyses (2S)-2-hydroxy-3-oxobutyl phosphate + 5-amino-6-(D-ribitylamino)uracil = 6,7-dimethyl-8-(1-D-ribityl)lumazine + phosphate + 2 H2O + H(+). It functions in the pathway cofactor biosynthesis; riboflavin biosynthesis; riboflavin from 2-hydroxy-3-oxobutyl phosphate and 5-amino-6-(D-ribitylamino)uracil: step 1/2. In terms of biological role, catalyzes the formation of 6,7-dimethyl-8-ribityllumazine by condensation of 5-amino-6-(D-ribitylamino)uracil with 3,4-dihydroxy-2-butanone 4-phosphate. This is the penultimate step in the biosynthesis of riboflavin. The polypeptide is 6,7-dimethyl-8-ribityllumazine synthase (Helicobacter pylori (strain P12)).